A 547-amino-acid chain; its full sequence is Chaperonin GroEL (547 aa).

Residues 30–33 (TLGP), Lys51, 87–91 (DGTTT), Gly415, 479–481 (NAA), and Asp495 contribute to the ATP site.

This sequence belongs to the chaperonin (HSP60) family. In terms of assembly, forms a cylinder of 14 subunits composed of two heptameric rings stacked back-to-back. Interacts with the co-chaperonin GroES.

It is found in the cytoplasm. The enzyme catalyses ATP + H2O + a folded polypeptide = ADP + phosphate + an unfolded polypeptide.. Functionally, together with its co-chaperonin GroES, plays an essential role in assisting protein folding. The GroEL-GroES system forms a nano-cage that allows encapsulation of the non-native substrate proteins and provides a physical environment optimized to promote and accelerate protein folding. This Pseudomonas putida (strain GB-1) protein is Chaperonin GroEL.